A 227-amino-acid polypeptide reads, in one-letter code: 7-cyano-7-deazaguanine synthase (227 aa).

Position 8-18 (8-18) interacts with ATP; that stretch reads FSGGQDSTTCL. The Zn(2+) site is built by C187, C196, C199, and C202.

It belongs to the QueC family. It depends on Zn(2+) as a cofactor.

It carries out the reaction 7-carboxy-7-deazaguanine + NH4(+) + ATP = 7-cyano-7-deazaguanine + ADP + phosphate + H2O + H(+). It participates in purine metabolism; 7-cyano-7-deazaguanine biosynthesis. Its function is as follows. Catalyzes the ATP-dependent conversion of 7-carboxy-7-deazaguanine (CDG) to 7-cyano-7-deazaguanine (preQ(0)). This is 7-cyano-7-deazaguanine synthase from Aliivibrio fischeri (strain ATCC 700601 / ES114) (Vibrio fischeri).